The sequence spans 442 residues: Type 3 secretion system ATPase (442 aa).

Residue 173–178 (GVGKST) participates in ATP binding.

This sequence belongs to the ATPase alpha/beta chains family. T3SS ATPase subfamily. In terms of assembly, the core secretion machinery of the T3SS is composed of approximately 20 different proteins, including cytoplasmic components, a base, an export apparatus and a needle. This subunit is part of the cytosolic complex. Forms homohexamers.

The protein localises to the cytoplasm. The catalysed reaction is ATP + H2O + cellular proteinSide 1 = ADP + phosphate + cellular proteinSide 2.. Its function is as follows. ATPase component of the type III secretion system (T3SS), also called injectisome, which is used to inject bacterial effector proteins into eukaryotic host cells. Acts as a molecular motor to provide the energy that is required for the export of proteins. Required for type III secretion apparatus (T3SA) formation, proper protein secretion, host cell invasion and virulence. May play a critical role in T3SS substrate recognition, disassembly of the effector/chaperone complex and unfolding of the effector in an ATP-dependent manner prior to secretion. The protein is Type 3 secretion system ATPase of Xanthomonas euvesicatoria.